The sequence spans 290 residues: Probable lipid hydrolase 463L (290 aa).

2 helical membrane-spanning segments follow: residues 26 to 46 (TLVLSGGAMRGVYLLGALNGL) and 53 to 73 (ISTFIGISSGSIICFLLSIGY). The PNPLA domain occupies 27-207 (LVLSGGAMRG…WNNFPIDIAI (181 aa)). The GXSXG signature appears at 58–62 (GISSG). Catalysis depends on Ser60, which acts as the Nucleophile. Asp194 serves as the catalytic Proton acceptor. Residues 194–196 (DGG) carry the DGA/G motif.

The protein localises to the membrane. In terms of biological role, probable lipid hydrolase. The polypeptide is Probable lipid hydrolase 463L (Invertebrate iridescent virus 6 (IIV-6)).